Reading from the N-terminus, the 232-residue chain is MKLLILACFVALALARAKEELNASGETVESLSSSEESITHISKEKIEKLKREEQQQTENERQNKIHQFPQPQPLAHPYTEPIPYPILPQNILPLAQVPVVVPLLHPEVMKDSKAKETIVPKRKGMPFPKSPAEPFVEGQSLTLTDFEVLSLPLLQSLMHQIPQPVPQTPMFAPQPLLSLPQAKVLPVPQQVVPFPQRDMPFQALLLYQDPLLGPLQGFYPVPQPVAPVYNPV.

Residues 1-15 (MKLLILACFVALALA) form the signal peptide. A glycan (N-linked (GlcNAc...) asparagine) is linked at Asn22. Residue Ser24 is modified to Phosphoserine. Thr27 bears the Phosphothreonine mark. A phosphoserine mark is found at Ser30, Ser32, Ser33, and Ser34. Positions 48 to 63 (KLKREEQQQTENERQN) are enriched in basic and acidic residues. Residues 48–74 (KLKREEQQQTENERQNKIHQFPQPQPL) are disordered.

Belongs to the beta-casein family. Mammary gland specific. Secreted in milk.

It is found in the secreted. In terms of biological role, important role in determination of the surface properties of the casein micelles. The chain is Beta-casein (CSN2) from Sus scrofa (Pig).